Consider the following 93-residue polypeptide: Small ribosomal subunit protein uS19c (93 aa).

Belongs to the universal ribosomal protein uS19 family.

It is found in the plastid. It localises to the chloroplast. Protein S19 forms a complex with S13 that binds strongly to the 16S ribosomal RNA. This is Small ribosomal subunit protein uS19c from Oryza nivara (Indian wild rice).